We begin with the raw amino-acid sequence, 986 residues long: Bifunctional glutamine synthetase adenylyltransferase/adenylyl-removing enzyme (986 aa).

The adenylyl removase stretch occupies residues 1-471 (MAEAIERSLS…RYAQLFEQEA (471 aa)). Residues 475 to 986 (TETGNLVFTG…RIFQGVVAAA (512 aa)) form an adenylyl transferase region.

This sequence belongs to the GlnE family. It depends on Mg(2+) as a cofactor.

The enzyme catalyses [glutamine synthetase]-O(4)-(5'-adenylyl)-L-tyrosine + phosphate = [glutamine synthetase]-L-tyrosine + ADP. It carries out the reaction [glutamine synthetase]-L-tyrosine + ATP = [glutamine synthetase]-O(4)-(5'-adenylyl)-L-tyrosine + diphosphate. Functionally, involved in the regulation of glutamine synthetase GlnA, a key enzyme in the process to assimilate ammonia. When cellular nitrogen levels are high, the C-terminal adenylyl transferase (AT) inactivates GlnA by covalent transfer of an adenylyl group from ATP to specific tyrosine residue of GlnA, thus reducing its activity. Conversely, when nitrogen levels are low, the N-terminal adenylyl removase (AR) activates GlnA by removing the adenylyl group by phosphorolysis, increasing its activity. The regulatory region of GlnE binds the signal transduction protein PII (GlnB) which indicates the nitrogen status of the cell. In Rhizobium meliloti (strain 1021) (Ensifer meliloti), this protein is Bifunctional glutamine synthetase adenylyltransferase/adenylyl-removing enzyme.